The sequence spans 223 residues: Ribonuclease 3 (223 aa).

The 124-residue stretch at 4-127 (LENLQKLLGY…VMGAVYLEAG (124 aa)) folds into the RNase III domain. Glu40 contacts Mg(2+). The active site involves Asp44. Mg(2+) is bound by residues Asp113 and Glu116. Glu116 is an active-site residue. The region spanning 154–223 (DYKTALQEIT…AKIALEKMKK (70 aa)) is the DRBM domain.

The protein belongs to the ribonuclease III family. As to quaternary structure, homodimer. Requires Mg(2+) as cofactor.

The protein resides in the cytoplasm. The catalysed reaction is Endonucleolytic cleavage to 5'-phosphomonoester.. Its function is as follows. Digests double-stranded RNA. Involved in the processing of primary rRNA transcript to yield the immediate precursors to the large and small rRNAs (23S and 16S). Processes some mRNAs, and tRNAs when they are encoded in the rRNA operon. Processes pre-crRNA and tracrRNA of type II CRISPR loci if present in the organism. The chain is Ribonuclease 3 from Campylobacter curvus (strain 525.92).